Reading from the N-terminus, the 215-residue chain is Probable transaldolase (215 aa).

Catalysis depends on Lys-84, which acts as the Schiff-base intermediate with substrate.

This sequence belongs to the transaldolase family. Type 3B subfamily.

The protein resides in the cytoplasm. The catalysed reaction is D-sedoheptulose 7-phosphate + D-glyceraldehyde 3-phosphate = D-erythrose 4-phosphate + beta-D-fructose 6-phosphate. Its pathway is carbohydrate degradation; pentose phosphate pathway; D-glyceraldehyde 3-phosphate and beta-D-fructose 6-phosphate from D-ribose 5-phosphate and D-xylulose 5-phosphate (non-oxidative stage): step 2/3. Transaldolase is important for the balance of metabolites in the pentose-phosphate pathway. This is Probable transaldolase from Exiguobacterium sibiricum (strain DSM 17290 / CCUG 55495 / CIP 109462 / JCM 13490 / 255-15).